The primary structure comprises 188 residues: Cytochrome c oxidase assembly protein CtaG (188 aa).

Topologically, residues 1 to 8 (MSKKSNKN) are cytoplasmic. The chain crosses the membrane as a helical; Signal-anchor for type II membrane protein span at residues 9–31 (LAFSLLGLIISMVLLSFASVPIY). The Periplasmic segment spans residues 32 to 188 (NLFCKVTGYG…SSLRGNYVSN (157 aa)).

Belongs to the COX11/CtaG family.

It localises to the cell inner membrane. Functionally, exerts its effect at some terminal stage of cytochrome c oxidase synthesis, probably by being involved in the insertion of the copper B into subunit I. This chain is Cytochrome c oxidase assembly protein CtaG, found in Rickettsia conorii (strain ATCC VR-613 / Malish 7).